Here is a 262-residue protein sequence, read N- to C-terminus: Polyamine aminopropyltransferase (262 aa).

Residues 1–249 (MWITQEITPY…DIHRAAFALP (249 aa)) form the PABS domain. Position 29 (Asn-29) interacts with S-methyl-5'-thioadenosine. Asp-83 is a binding site for spermidine. Catalysis depends on Asp-155, which acts as the Proton acceptor.

Belongs to the spermidine/spermine synthase family. In terms of assembly, homodimer or homotetramer.

Its subcellular location is the cytoplasm. The enzyme catalyses S-adenosyl 3-(methylsulfanyl)propylamine + putrescine = S-methyl-5'-thioadenosine + spermidine + H(+). Its pathway is amine and polyamine biosynthesis; spermidine biosynthesis; spermidine from putrescine: step 1/1. In terms of biological role, catalyzes the irreversible transfer of a propylamine group from the amino donor S-adenosylmethioninamine (decarboxy-AdoMet) to putrescine (1,4-diaminobutane) to yield spermidine. This chain is Polyamine aminopropyltransferase, found in Helicobacter pylori (strain G27).